Consider the following 62-residue polypeptide: Sperm protamine P1 (62 aa).

A disordered region spans residues 1–62 (MARYRRRSRS…RYSRRGRRRY (62 aa)).

Belongs to the protamine P1 family. As to expression, testis.

The protein localises to the nucleus. The protein resides in the chromosome. Its function is as follows. Protamines substitute for histones in the chromatin of sperm during the haploid phase of spermatogenesis. They compact sperm DNA into a highly condensed, stable and inactive complex. The chain is Sperm protamine P1 (PRM1) from Sarcophilus harrisii (Tasmanian devil).